Consider the following 147-residue polypeptide: Adenylylsulfatase HINT1 (147 aa).

The HIT domain maps to 37 to 147; the sequence is IFDKIISKEI…GGRQMNWPPG (111 aa). Residues 131–135 carry the Histidine triad motif motif; it reads HIHVH. His-133 serves as the catalytic Tele-AMP-histidine intermediate. Residue His-135 coordinates substrate.

It is found in the peroxisome. The protein localises to the plastid. It localises to the chloroplast. The catalysed reaction is adenosine 5'-phosphosulfate + H2O = sulfate + AMP + 2 H(+). Functionally, possesses adenylylsulfatase activity in vitro. The protein is Adenylylsulfatase HINT1 of Arabidopsis thaliana (Mouse-ear cress).